The primary structure comprises 535 residues: Cytochrome P450 monooxygenase claQ (535 aa).

2 helical membrane-spanning segments follow: residues 7-27 (IGTWDVLFFLVFLWLLSKLVG) and 225-245 (YFAIVVFLLAQIFPILLNLPT). C472 contacts heme.

It belongs to the cytochrome P450 family. Requires heme as cofactor.

It localises to the membrane. The protein operates within secondary metabolite biosynthesis; terpenoid biosynthesis. Its function is as follows. Cytochrome P450 monooxygenase; part of the gene cluster that mediates the biosynthesis of clavilactone A, a meroterpenoid that features a unique benzo-fused ten-membered carbocyclic ring unit with an alpha,beta-epoxy-gamma-lactone moiety, forming an intriguing 10/5/3 tricyclic nested skeleton. Cytochrome P450 monooxygenases claO, claP, claQ, claU, and claW are close orthologs, suggesting that a redundant function or pseudogenes are present in the cla cluster. These monoxygenases are not involved in clavilactone A biosynthesis nor its modification. ClaR, ClaS and ClaT are sufficient to produce clavilactone A. The biosynthesis begins with the prenyltransferase claS that transfers geranyl pyrophosphate (GPP) to hydroquinone to produces geranylhydroquinone. The cytochrome P450 monooxygenase claR then catalyzes the diradical coupling reaction between the intramolecular hydroquinone and allyl moieties to form the benzo-fused ten-membered carbocyclic ring unit of wigantol. Finally the cytochrome P450 monooxygenase claT exquisitely and stereoselectively assembles the alpha,beta-epoxy-gamma-lactone moiety, producing clavilactone A via arnebinol A. The sequence is that of Cytochrome P450 monooxygenase claQ from Ampulloclitocybe clavipes (Club foot).